Reading from the N-terminus, the 31-residue chain is U14-ctenitoxin-Co1a (31 aa).

Post-translationally, disulfide bonds are present. As to expression, expressed by the venom gland.

The protein resides in the secreted. Its function is as follows. Omega-agatoxins are antagonists of voltage-gated calcium channels (Cav). The polypeptide is U14-ctenitoxin-Co1a (Ctenus ornatus (Brazilian spider)).